The chain runs to 155 residues: Ribonuclease H (155 aa).

In terms of domain architecture, RNase H type-1 spans 1-142 (MLKQVEIFTD…CDELARAAAM (142 aa)). Mg(2+) contacts are provided by D10, E48, D70, and D134.

It belongs to the RNase H family. As to quaternary structure, monomer. Mg(2+) serves as cofactor.

It is found in the cytoplasm. The catalysed reaction is Endonucleolytic cleavage to 5'-phosphomonoester.. Endonuclease that specifically degrades the RNA of RNA-DNA hybrids. The protein is Ribonuclease H of Salmonella paratyphi A (strain AKU_12601).